A 390-amino-acid polypeptide reads, in one-letter code: MRTLLDLDPKGKRVLVRVDYNVPVQDGKVQDETRILESLPTLRHLLAGGASLVLLSHLGRPKGPDPKYSLAPVGEALRAHLPEARFAPFPPGSEEARREAEALRPGEVLLLENVRFEPGEEKNDPELSARYARLGEAFVLDAFGSAHRAHASVVGVARLLPAYAGFLMEKEVRALSRLLKDPERPYAVVLGGAKVSDKIGVIESLLPRIDRLLIGGAMAFTFLKALGGEVGRSLVEEDRLDLAKDLLGRAEALGVRVYLPEDVVAAERIEAGVETRVFPARAIPVPYMGLDIGPKTREAFARALEGARTVFWNGPMGVFEVPPFDEGTLAVGQAIAALEGAFTVVGGGDSVAAVNRLGLKERFGHVSTGGGASLEFLEKGTLPGLEVLEG.

Substrate contacts are provided by residues 19–21 (DYN), Arg34, 57–60 (HLGR), Arg115, and Arg148. ATP contacts are provided by residues Lys198, Gly289, Glu320, and 347–350 (GGDS).

This sequence belongs to the phosphoglycerate kinase family. In terms of assembly, monomer.

It is found in the cytoplasm. The catalysed reaction is (2R)-3-phosphoglycerate + ATP = (2R)-3-phospho-glyceroyl phosphate + ADP. It functions in the pathway carbohydrate degradation; glycolysis; pyruvate from D-glyceraldehyde 3-phosphate: step 2/5. This is Phosphoglycerate kinase (pgk) from Thermus thermophilus (strain ATCC 27634 / DSM 579 / HB8).